A 420-amino-acid chain; its full sequence is Tryptophan--tRNA ligase (420 aa).

The 'HIGH' region motif lies at 72–80 (PSGLPHFGH). Residues 308–312 (KMSSS) carry the 'KMSKS' region motif.

The protein belongs to the class-I aminoacyl-tRNA synthetase family.

It is found in the cytoplasm. The enzyme catalyses tRNA(Trp) + L-tryptophan + ATP = L-tryptophyl-tRNA(Trp) + AMP + diphosphate + H(+). The protein is Tryptophan--tRNA ligase of Archaeoglobus fulgidus (strain ATCC 49558 / DSM 4304 / JCM 9628 / NBRC 100126 / VC-16).